A 236-amino-acid chain; its full sequence is Ribose-5-phosphate isomerase A (236 aa).

Substrate is bound by residues 29–32, 86–89, and 99–102; these read SGST, DGAD, and KGGG. Residue glutamate 108 is the Proton acceptor of the active site. Lysine 126 serves as a coordination point for substrate.

This sequence belongs to the ribose 5-phosphate isomerase family. Homodimer.

It catalyses the reaction aldehydo-D-ribose 5-phosphate = D-ribulose 5-phosphate. The protein operates within carbohydrate degradation; pentose phosphate pathway; D-ribose 5-phosphate from D-ribulose 5-phosphate (non-oxidative stage): step 1/1. In terms of biological role, catalyzes the reversible conversion of ribose-5-phosphate to ribulose 5-phosphate. The sequence is that of Ribose-5-phosphate isomerase A from Prochlorococcus marinus (strain NATL1A).